A 240-amino-acid polypeptide reads, in one-letter code: Zein-alpha M6 (240 aa).

An N-terminal signal peptide occupies residues 1-21; the sequence is MATKIFSLLMLLALSTCVANA.

It belongs to the zein family.

Functionally, zeins are major seed storage proteins. This is Zein-alpha M6 from Zea mays (Maize).